The following is a 210-amino-acid chain: Ribosomal RNA small subunit methyltransferase G (210 aa).

S-adenosyl-L-methionine contacts are provided by residues Gly75, Phe80, 98-100 (EST), 126-127 (AE), and Arg141.

It belongs to the methyltransferase superfamily. RNA methyltransferase RsmG family.

It is found in the cytoplasm. In terms of biological role, specifically methylates the N7 position of a guanine in 16S rRNA. This chain is Ribosomal RNA small subunit methyltransferase G, found in Solibacter usitatus (strain Ellin6076).